Here is a 524-residue protein sequence, read N- to C-terminus: Phosphoenolpyruvate carboxykinase (ATP) (524 aa).

The substrate site is built by Arg52, Tyr188, and Lys194. Residues Lys194, His213, and 229 to 237 (GLSGTGKTT) each bind ATP. Residues Lys194 and His213 each contribute to the Mn(2+) site. Mn(2+) is bound at residue Asp250. Glu278, Arg314, and Thr439 together coordinate ATP. Position 314 (Arg314) interacts with substrate.

It belongs to the phosphoenolpyruvate carboxykinase (ATP) family. Mn(2+) is required as a cofactor.

It is found in the cytoplasm. The catalysed reaction is oxaloacetate + ATP = phosphoenolpyruvate + ADP + CO2. Its pathway is carbohydrate biosynthesis; gluconeogenesis. Involved in the gluconeogenesis. Catalyzes the conversion of oxaloacetate (OAA) to phosphoenolpyruvate (PEP) through direct phosphoryl transfer between the nucleoside triphosphate and OAA. The polypeptide is Phosphoenolpyruvate carboxykinase (ATP) (Campylobacter jejuni subsp. jejuni serotype O:2 (strain ATCC 700819 / NCTC 11168)).